The primary structure comprises 483 residues: Fructose-like PTS system EIIBC component (483 aa).

The PTS EIIB type-2 domain maps to 1-105 (MESSLRIVAI…IDQIFSELPT (105 aa)). The Phosphocysteine intermediate; for EIIB activity role is filled by cysteine 13. Cysteine 13 carries the post-translational modification Phosphocysteine; by EIIA. The PTS EIIC type-2 domain occupies 128–475 (VMSHLMAGVS…LWLRRKAKAA (348 aa)). The next 10 membrane-spanning stretches (helical) occupy residues 132–152 (LMAG…LVAL), 180–200 (IGYL…ASSI), 204–224 (PAFA…LLGT), 227–247 (GAGF…VFWF), 264–284 (LIPF…IGPV), 303–323 (MKFA…GGPI), 344–364 (AIVG…TFIA), 380–400 (IVVG…AAPL), 402–422 (MITA…AFGI), and 442–462 (VGSF…FIIV).

The protein resides in the cell inner membrane. It catalyses the reaction D-fructose(out) + N(pros)-phospho-L-histidyl-[protein] = D-fructose 1-phosphate(in) + L-histidyl-[protein]. In terms of biological role, the phosphoenolpyruvate-dependent sugar phosphotransferase system (sugar PTS), a major carbohydrate active transport system, catalyzes the phosphorylation of incoming sugar substrates concomitantly with their translocation across the cell membrane. The enzyme II FrvAB PTS system is involved in fructose transport. In Escherichia coli (strain K12), this protein is Fructose-like PTS system EIIBC component.